Consider the following 101-residue polypeptide: Small ribosomal subunit protein uS14 (101 aa).

Belongs to the universal ribosomal protein uS14 family. Part of the 30S ribosomal subunit. Contacts proteins S3 and S10.

Its function is as follows. Binds 16S rRNA, required for the assembly of 30S particles and may also be responsible for determining the conformation of the 16S rRNA at the A site. This Aromatoleum aromaticum (strain DSM 19018 / LMG 30748 / EbN1) (Azoarcus sp. (strain EbN1)) protein is Small ribosomal subunit protein uS14.